The primary structure comprises 255 residues: Type III pantothenate kinase (255 aa).

ATP is bound at residue 6-13 (DIGNTTSE). Substrate-binding positions include Tyr-100 and 107 to 110 (GIDR). Residue Asp-109 is the Proton acceptor of the active site. Residue Asp-129 participates in K(+) binding. Residue Thr-132 coordinates ATP. Thr-184 is a binding site for substrate.

It belongs to the type III pantothenate kinase family. In terms of assembly, homodimer. NH4(+) is required as a cofactor. It depends on K(+) as a cofactor.

The protein localises to the cytoplasm. The catalysed reaction is (R)-pantothenate + ATP = (R)-4'-phosphopantothenate + ADP + H(+). Its pathway is cofactor biosynthesis; coenzyme A biosynthesis; CoA from (R)-pantothenate: step 1/5. Catalyzes the phosphorylation of pantothenate (Pan), the first step in CoA biosynthesis. The polypeptide is Type III pantothenate kinase (Persephonella marina (strain DSM 14350 / EX-H1)).